Reading from the N-terminus, the 336-residue chain is Torsin-1B (336 aa).

The first 24 residues, 1-24 (MLRAGWLRGAAALALLLAARVVAA), serve as a signal peptide directing secretion. A glycan (N-linked (GlcNAc...) asparagine) is linked at Asn64. 109-116 (GWAGTGKN) provides a ligand contact to ATP. An N-linked (GlcNAc...) asparagine glycan is attached at Asn165.

This sequence belongs to the ClpA/ClpB family. Torsin subfamily. As to quaternary structure, homohexamer. Interacts with TOR1A; the interaction may be specific of neural tissues. Interacts with TOR1AIP1; TOR1AIP1 is required for TOR1B location on the nuclear membrane. Interacts (ATP-bound) with TOR1AIP2; important for endoplasmic reticulum integrity. Post-translationally, N-glycosylated. In terms of tissue distribution, widely expressed with low levels in brain.

The protein resides in the endoplasmic reticulum lumen. The protein localises to the nucleus membrane. The catalysed reaction is ATP + H2O = ADP + phosphate + H(+). May serve as a molecular chaperone assisting in the proper folding of secreted and/or membrane proteins. Plays a role in non-neural cells nuclear envelope and endoplasmic reticulum integrity. May have a redundant function with TOR1A in non-neural tissues. This chain is Torsin-1B (TOR1B), found in Homo sapiens (Human).